We begin with the raw amino-acid sequence, 192 residues long: UPF0149 protein KPK_0755 (192 aa).

It belongs to the UPF0149 family.

This is UPF0149 protein KPK_0755 from Klebsiella pneumoniae (strain 342).